The chain runs to 331 residues: L-lactate dehydrogenase A chain (331 aa).

NAD(+) is bound by residues 29-57 and R98; that span reads GMVG…MEDK. Substrate is bound by residues R105, N137, and R168. NAD(+) is bound at residue N137. Residue H192 is the Proton acceptor of the active site. Residue T247 coordinates substrate.

Belongs to the LDH/MDH superfamily. LDH family. As to quaternary structure, homotetramer.

Its subcellular location is the cytoplasm. The catalysed reaction is (S)-lactate + NAD(+) = pyruvate + NADH + H(+). It functions in the pathway fermentation; pyruvate fermentation to lactate; (S)-lactate from pyruvate: step 1/1. Interconverts simultaneously and stereospecifically pyruvate and lactate with concomitant interconversion of NADH and NAD(+). This is L-lactate dehydrogenase A chain (ldha) from Chaenocephalus aceratus (Blackfin icefish).